The chain runs to 359 residues: GalNAc-alpha-(1-&gt;4)-GalNAc-alpha-(1-&gt;3)-diNAcBac-PP-undecaprenol alpha-1,4-N-acetyl-D-galactosaminyltransferase (359 aa).

Glutamate 17 is a substrate binding site. Tyrosine 45 contributes to the UDP-N-acetyl-alpha-D-galactosamine binding site. Residue 71–74 coordinates substrate; that stretch reads RFKK. UDP-N-acetyl-alpha-D-galactosamine is bound by residues histidine 117, arginine 190, lysine 195, valine 246, and 266–274; that span reads EGLPTVLIE. A substrate-binding site is contributed by arginine 190.

It belongs to the glycosyltransferase group 1 family.

The protein resides in the cell inner membrane. The enzyme catalyses N-acetyl-alpha-D-galactosaminyl-(1-&gt;4)-N-acetyl-alpha-D-galactosaminyl-(1-&gt;3)-N,N'-diacetyl-alpha-D-bacillosaminyl-tri-trans,heptacis-undecaprenyl diphosphate + 3 UDP-N-acetyl-alpha-D-galactosamine = [alpha-D-GalNAc-(1-&gt;4)]4-alpha-D-GalNAc-(1-&gt;3)-alpha-D-diNAcBac-tri-trans,hepta-cis-undecaprenyl diphosphate + 3 UDP + 3 H(+). It functions in the pathway protein modification; protein glycosylation. In terms of biological role, processive glycosyltransferase that is part of the biosynthetic pathway of the lipid-linked oligosaccharide (LLO) that serves as the glycan donor in bacterial protein N-glycosylation. Catalyzes the transfer of exactly three alpha-(1-&gt;4)-N-acetylgalactosamine (GalNAc) units to the growing LLO precursor, GalNAc-alpha-(1-&gt;4)-GalNAc-alpha-(1-&gt;3)-diNAcBac-PP-undecaprenyl. Cannot accept UDP-GlcNAc as substrate. In Campylobacter jejuni subsp. jejuni serotype O:2 (strain ATCC 700819 / NCTC 11168), this protein is GalNAc-alpha-(1-&gt;4)-GalNAc-alpha-(1-&gt;3)-diNAcBac-PP-undecaprenol alpha-1,4-N-acetyl-D-galactosaminyltransferase.